We begin with the raw amino-acid sequence, 349 residues long: S-adenosylmethionine:tRNA ribosyltransferase-isomerase (349 aa).

The protein belongs to the QueA family. Monomer.

Its subcellular location is the cytoplasm. The enzyme catalyses 7-aminomethyl-7-carbaguanosine(34) in tRNA + S-adenosyl-L-methionine = epoxyqueuosine(34) in tRNA + adenine + L-methionine + 2 H(+). It functions in the pathway tRNA modification; tRNA-queuosine biosynthesis. Its function is as follows. Transfers and isomerizes the ribose moiety from AdoMet to the 7-aminomethyl group of 7-deazaguanine (preQ1-tRNA) to give epoxyqueuosine (oQ-tRNA). The polypeptide is S-adenosylmethionine:tRNA ribosyltransferase-isomerase (Azotobacter vinelandii (strain DJ / ATCC BAA-1303)).